The sequence spans 386 residues: Succinate--CoA ligase [ADP-forming] subunit beta (386 aa).

Residues 9–244 (KELLRQYGVA…LDEEDPKEIE (236 aa)) form the ATP-grasp domain. Residues lysine 46, 53–55 (GRG), glutamate 99, cysteine 102, and glutamate 107 each bind ATP. Residues asparagine 199 and aspartate 213 each coordinate Mg(2+). Substrate is bound by residues asparagine 264 and 321-323 (GIM).

Belongs to the succinate/malate CoA ligase beta subunit family. Heterotetramer of two alpha and two beta subunits. Mg(2+) serves as cofactor.

It catalyses the reaction succinate + ATP + CoA = succinyl-CoA + ADP + phosphate. The catalysed reaction is GTP + succinate + CoA = succinyl-CoA + GDP + phosphate. The protein operates within carbohydrate metabolism; tricarboxylic acid cycle; succinate from succinyl-CoA (ligase route): step 1/1. Functionally, succinyl-CoA synthetase functions in the citric acid cycle (TCA), coupling the hydrolysis of succinyl-CoA to the synthesis of either ATP or GTP and thus represents the only step of substrate-level phosphorylation in the TCA. The beta subunit provides nucleotide specificity of the enzyme and binds the substrate succinate, while the binding sites for coenzyme A and phosphate are found in the alpha subunit. The chain is Succinate--CoA ligase [ADP-forming] subunit beta from Halalkalibacterium halodurans (strain ATCC BAA-125 / DSM 18197 / FERM 7344 / JCM 9153 / C-125) (Bacillus halodurans).